The primary structure comprises 162 residues: Xanthine-guanine phosphoribosyltransferase (162 aa).

5-phospho-alpha-D-ribose 1-diphosphate-binding positions include 43–44 (RG) and 94–102 (DDLVDTGTT). Residue D95 coordinates Mg(2+). Guanine-binding residues include D98 and I141. Residues D98 and I141 each coordinate xanthine. GMP is bound by residues 98-102 (DTGTT) and 140-141 (WI).

Belongs to the purine/pyrimidine phosphoribosyltransferase family. XGPT subfamily. As to quaternary structure, homotetramer. Mg(2+) is required as a cofactor.

Its subcellular location is the cell inner membrane. It catalyses the reaction GMP + diphosphate = guanine + 5-phospho-alpha-D-ribose 1-diphosphate. The enzyme catalyses XMP + diphosphate = xanthine + 5-phospho-alpha-D-ribose 1-diphosphate. The catalysed reaction is IMP + diphosphate = hypoxanthine + 5-phospho-alpha-D-ribose 1-diphosphate. Its pathway is purine metabolism; GMP biosynthesis via salvage pathway; GMP from guanine: step 1/1. It functions in the pathway purine metabolism; XMP biosynthesis via salvage pathway; XMP from xanthine: step 1/1. Its function is as follows. Purine salvage pathway enzyme that catalyzes the transfer of the ribosyl-5-phosphate group from 5-phospho-alpha-D-ribose 1-diphosphate (PRPP) to the N9 position of the 6-oxopurines guanine and xanthine to form the corresponding ribonucleotides GMP (guanosine 5'-monophosphate) and XMP (xanthosine 5'-monophosphate), with the release of PPi. To a lesser extent, also acts on hypoxanthine. The polypeptide is Xanthine-guanine phosphoribosyltransferase (Oleidesulfovibrio alaskensis (strain ATCC BAA-1058 / DSM 17464 / G20) (Desulfovibrio alaskensis)).